The sequence spans 287 residues: Putative ankyrin repeat protein R791 (287 aa).

7 ANK repeats span residues 40–71 (HNFNVLHEVIKRGYVHILKYVDELENLGPLVF), 76–105 (NVHDKLKLACNHDQLPIVKYLVETNSNIET), 107–134 (NDDVIITASFYGRTNIVEYFIKKDIDNK), 135–164 (TIFEALKNACDNGHLETMILLINNGVDIKA), 165–194 (KDNFIIKQAISKGHLNIVKYLVENGATIDI), 196–224 (DDTYIINSAQKGYYKMVEYLVYRGADYRT), and 225–254 (VDDLPIRCALMGGHLDVVKYLQSLGADIEA).

The protein is Putative ankyrin repeat protein R791 of Acanthamoeba polyphaga (Amoeba).